We begin with the raw amino-acid sequence, 220 residues long: N-(5'-phosphoribosyl)anthranilate isomerase (220 aa).

Belongs to the TrpF family.

The catalysed reaction is N-(5-phospho-beta-D-ribosyl)anthranilate = 1-(2-carboxyphenylamino)-1-deoxy-D-ribulose 5-phosphate. Its pathway is amino-acid biosynthesis; L-tryptophan biosynthesis; L-tryptophan from chorismate: step 3/5. The sequence is that of N-(5'-phosphoribosyl)anthranilate isomerase from Leptothrix cholodnii (strain ATCC 51168 / LMG 8142 / SP-6) (Leptothrix discophora (strain SP-6)).